Reading from the N-terminus, the 914-residue chain is Polyribonucleotide nucleotidyltransferase (914 aa).

The tract at residues 407–427 (YMHNYEMPPYSTGETGRVGSP) is disordered. Mg(2+) is bound by residues Asp521 and Asp527. The region spanning 587–646 (PRIITTSVPVEKIGEVIGPKGKMINQIQEDTGAEIAIEDDGTVFISSEGGEAAKKAKSII) is the KH domain. An S1 motif domain is found at 658 to 730 (GETYNGKVVK…DRGKISLAIP (73 aa)). Residues 727 to 914 (LAIPGFEDQE…VRRDFDPFED (188 aa)) are disordered. 3 stretches are compositionally biased toward basic and acidic residues: residues 742–789 (SRGD…RRSD), 797–865 (DRPR…DRRG), and 873–899 (RGSDRNPRYATDDNYDDYRADREERTE).

This sequence belongs to the polyribonucleotide nucleotidyltransferase family. The cofactor is Mg(2+).

Its subcellular location is the cytoplasm. It catalyses the reaction RNA(n+1) + phosphate = RNA(n) + a ribonucleoside 5'-diphosphate. Functionally, involved in mRNA degradation. Catalyzes the phosphorolysis of single-stranded polyribonucleotides processively in the 3'- to 5'-direction. The chain is Polyribonucleotide nucleotidyltransferase from Bifidobacterium longum subsp. infantis (strain ATCC 15697 / DSM 20088 / JCM 1222 / NCTC 11817 / S12).